Consider the following 375-residue polypeptide: Trichodiene synthase (375 aa).

Belongs to the trichodiene synthase family.

It catalyses the reaction (2E,6E)-farnesyl diphosphate = trichodiene + diphosphate. It participates in sesquiterpene biosynthesis; trichothecene biosynthesis. Functionally, TS is a member of the terpene cyclase group of enzymes. It catalyzes the isomerization and cyclization of farnesyl pyro-phosphate to form trichodiene, the first cyclic intermediate in the biosynthetic pathway for trichothecenes. It serves to branch trichothecene biosynthesis from the isoprenoid pathway. This Fusarium cortaderiae protein is Trichodiene synthase (TRI5).